The following is a 258-amino-acid chain: Tryptophan synthase alpha chain (258 aa).

Catalysis depends on proton acceptor residues Glu52 and Asp63.

The protein belongs to the TrpA family. As to quaternary structure, tetramer of two alpha and two beta chains.

It catalyses the reaction (1S,2R)-1-C-(indol-3-yl)glycerol 3-phosphate + L-serine = D-glyceraldehyde 3-phosphate + L-tryptophan + H2O. Its pathway is amino-acid biosynthesis; L-tryptophan biosynthesis; L-tryptophan from chorismate: step 5/5. In terms of biological role, the alpha subunit is responsible for the aldol cleavage of indoleglycerol phosphate to indole and glyceraldehyde 3-phosphate. This is Tryptophan synthase alpha chain from Streptococcus pneumoniae serotype 4 (strain ATCC BAA-334 / TIGR4).